The primary structure comprises 260 residues: NifU-like protein C1709.19c (260 aa).

The segment at 161-231 (IKELIETSIR…IPEVENVVQV (71 aa)) is nifU.

The protein belongs to the NifU family.

The protein is NifU-like protein C1709.19c of Schizosaccharomyces pombe (strain 972 / ATCC 24843) (Fission yeast).